The following is a 239-amino-acid chain: Heptaprenylglyceryl phosphate synthase (239 aa).

A sn-glycerol 1-phosphate-binding site is contributed by K12. 2 residues coordinate Mg(2+): D14 and T40. Residues 159-164, G189, and 209-210 contribute to the sn-glycerol 1-phosphate site; these read YLEYSG and GN.

The protein belongs to the GGGP/HepGP synthase family. Group I subfamily. As to quaternary structure, homodimer. It depends on Mg(2+) as a cofactor.

It catalyses the reaction sn-glycerol 1-phosphate + all-trans-heptaprenyl diphosphate = 3-heptaprenyl-sn-glycero-1-phosphate + diphosphate. The protein operates within membrane lipid metabolism; glycerophospholipid metabolism. Functionally, prenyltransferase that catalyzes in vivo the transfer of the heptaprenyl moiety of heptaprenyl pyrophosphate (HepPP; 35 carbon atoms) to the C3 hydroxyl of sn-glycerol-1-phosphate (G1P), producing heptaprenylglyceryl phosphate (HepGP). This reaction is an ether-bond-formation step in the biosynthesis of archaea-type G1P-based membrane lipids found in Bacillales. This chain is Heptaprenylglyceryl phosphate synthase, found in Geobacillus thermodenitrificans (strain NG80-2).